The following is an 84-amino-acid chain: Limulin (84 aa).

The region spanning 6 to 84 (ITSKVKFPPS…DEQGDFLFNV (79 aa)) is the Pentraxin (PTX) domain. The Ca(2+) site is built by Asp-67 and Asn-68.

Belongs to the pentraxin family. In terms of assembly, homopentamer. Pentraxin (or pentaxin) have a discoid arrangement of 5 non-covalently bound subunits. The cofactor is Ca(2+). In terms of processing, a disulfide bond links Cys-38 to a Cys in the C-terminal half of the chain of 163 residues.

Lectin that binds sialic acid. Displays antiviral activity and therefore may contribute to defense against infections. In Limulus polyphemus (Atlantic horseshoe crab), this protein is Limulin.